We begin with the raw amino-acid sequence, 285 residues long: 2-dehydro-3-deoxyphosphooctonate aldolase (285 aa).

The protein belongs to the KdsA family.

It is found in the cytoplasm. It carries out the reaction D-arabinose 5-phosphate + phosphoenolpyruvate + H2O = 3-deoxy-alpha-D-manno-2-octulosonate-8-phosphate + phosphate. It functions in the pathway carbohydrate biosynthesis; 3-deoxy-D-manno-octulosonate biosynthesis; 3-deoxy-D-manno-octulosonate from D-ribulose 5-phosphate: step 2/3. The protein operates within bacterial outer membrane biogenesis; lipopolysaccharide biosynthesis. This is 2-dehydro-3-deoxyphosphooctonate aldolase from Bordetella bronchiseptica (strain ATCC BAA-588 / NCTC 13252 / RB50) (Alcaligenes bronchisepticus).